The primary structure comprises 566 residues: MDIKRIILYVIVALLAIALFNAWQRDYPPTPKPTPTVEQPTANGDHPTAYTPPAFTPGAAEKTKKAGTIAFTSKVPEARLITVRTDVLDVEIDTQGGNIVSAKLPKYPVSLEEKQTPVQILSGEPNELYIAQSGLTNGNGQPTTVQFESEKKQYVLENGQNQLIVQLTGRAPDGLLVTKTYTFHRDDYAIHLAYQVKNNTSKPWQGSLYTQITRRQPPTEHHHFYVRSYNGASMGSPQTPYEKLSYESLDKQNIDRTSQSGWIAMQQHYFLSAWVPGNPELTYHYYSHVIPASDEPNVYVVGFVSPQMNVAAGSEAATHATLYVGPEIAKRLKGLAPGLERTIDYGWLWPISMLLFWILSAVHAVVKNWGWSIIITTILIKIVFYWFSAKSFRSMARMREMQPRIQALKERHGDDRQALSRATMELYRKEKINPLGGCLPMLIQVPVFIAFYYVIIESVQLRQAPFIFWIHDLSVKDPYYILPIIMGLSMLAQQWVSPTSPDPTQQKMMWILPVIFTVFFINFPAGLVLYWITNNVVQTLQQWYVNKTYESHKAKLKARRARKRKR.

The next 5 membrane-spanning stretches (helical) occupy residues 3–23 (IKRI…FNAW), 346–366 (GWLW…HAVV), 369–389 (WGWS…WFSA), 436–456 (GGCL…YVII), and 509–529 (MWIL…GLVL).

This sequence belongs to the OXA1/ALB3/YidC family. Type 1 subfamily. As to quaternary structure, interacts with the Sec translocase complex via SecD. Specifically interacts with transmembrane segments of nascent integral membrane proteins during membrane integration.

It is found in the cell inner membrane. Required for the insertion and/or proper folding and/or complex formation of integral membrane proteins into the membrane. Involved in integration of membrane proteins that insert both dependently and independently of the Sec translocase complex, as well as at least some lipoproteins. Aids folding of multispanning membrane proteins. The sequence is that of Membrane protein insertase YidC from Coxiella burnetii (strain RSA 331 / Henzerling II).